The primary structure comprises 422 residues: Phospho-N-acetylmuramoyl-pentapeptide-transferase (422 aa).

9 helical membrane passes run 28 to 48, 71 to 91, 95 to 115, 136 to 156, 211 to 231, 246 to 266, 279 to 299, 313 to 333, and 399 to 419; these read LMAI…FINL, VGVP…PCLL, LHNI…SLGF, IIGQ…SPDV, AGWI…SNGA, AIIG…EFAG, LVIF…YNAY, IGGI…IPIL, and KITV…IITL.

This sequence belongs to the glycosyltransferase 4 family. MraY subfamily. The cofactor is Mg(2+).

It is found in the cell inner membrane. The enzyme catalyses UDP-N-acetyl-alpha-D-muramoyl-L-alanyl-gamma-D-glutamyl-meso-2,6-diaminopimeloyl-D-alanyl-D-alanine + di-trans,octa-cis-undecaprenyl phosphate = di-trans,octa-cis-undecaprenyl diphospho-N-acetyl-alpha-D-muramoyl-L-alanyl-D-glutamyl-meso-2,6-diaminopimeloyl-D-alanyl-D-alanine + UMP. The protein operates within cell wall biogenesis; peptidoglycan biosynthesis. In terms of biological role, catalyzes the initial step of the lipid cycle reactions in the biosynthesis of the cell wall peptidoglycan: transfers peptidoglycan precursor phospho-MurNAc-pentapeptide from UDP-MurNAc-pentapeptide onto the lipid carrier undecaprenyl phosphate, yielding undecaprenyl-pyrophosphoryl-MurNAc-pentapeptide, known as lipid I. The sequence is that of Phospho-N-acetylmuramoyl-pentapeptide-transferase from Bacteroides fragilis (strain ATCC 25285 / DSM 2151 / CCUG 4856 / JCM 11019 / LMG 10263 / NCTC 9343 / Onslow / VPI 2553 / EN-2).